A 76-amino-acid polypeptide reads, in one-letter code: Cytochrome c oxidase subunit 6C-1 (76 aa).

Topologically, residues 2-10 (SLAKPAMRG) are mitochondrial matrix. Residues 11-51 (LLGKRLRFHLPIAFTLSLVAALGFKYGVTEPRKQAYADFYK) traverse the membrane as a helical segment. Topologically, residues 52–76 (QYDAVKDFNAMREAGIFESVRPSGE) are mitochondrial intermembrane.

It belongs to the cytochrome c oxidase subunit 6c family. In terms of assembly, component of the cytochrome c oxidase (complex IV, CIV), a multisubunit enzyme composed of 14 subunits. The complex is composed of a catalytic core of 3 subunits MT-CO1, MT-CO2 and MT-CO3, encoded in the mitochondrial DNA, and 11 supernumerary subunits COX4I, COX5A, COX5B, COX6A, COX6B, COX6C, COX7A, COX7B, COX7C, COX8 and NDUFA4, which are encoded in the nuclear genome. The complex exists as a monomer or a dimer and forms supercomplexes (SCs) in the inner mitochondrial membrane with NADH-ubiquinone oxidoreductase (complex I, CI) and ubiquinol-cytochrome c oxidoreductase (cytochrome b-c1 complex, complex III, CIII), resulting in different assemblies (supercomplex SCI(1)III(2)IV(1) and megacomplex MCI(2)III(2)IV(2)).

It is found in the mitochondrion inner membrane. Its pathway is energy metabolism; oxidative phosphorylation. Component of the cytochrome c oxidase, the last enzyme in the mitochondrial electron transport chain which drives oxidative phosphorylation. The respiratory chain contains 3 multisubunit complexes succinate dehydrogenase (complex II, CII), ubiquinol-cytochrome c oxidoreductase (cytochrome b-c1 complex, complex III, CIII) and cytochrome c oxidase (complex IV, CIV), that cooperate to transfer electrons derived from NADH and succinate to molecular oxygen, creating an electrochemical gradient over the inner membrane that drives transmembrane transport and the ATP synthase. Cytochrome c oxidase is the component of the respiratory chain that catalyzes the reduction of oxygen to water. Electrons originating from reduced cytochrome c in the intermembrane space (IMS) are transferred via the dinuclear copper A center (CU(A)) of subunit 2 and heme A of subunit 1 to the active site in subunit 1, a binuclear center (BNC) formed by heme A3 and copper B (CU(B)). The BNC reduces molecular oxygen to 2 water molecules using 4 electrons from cytochrome c in the IMS and 4 protons from the mitochondrial matrix. This is Cytochrome c oxidase subunit 6C-1 from Thunnus obesus (Bigeye tuna).